The primary structure comprises 282 residues: Putative hydrolase Bcenmc03_4750 (282 aa).

E124, E126, and D155 together coordinate Mg(2+).

The protein belongs to the FAH family. It depends on Mg(2+) as a cofactor.

The polypeptide is Putative hydrolase Bcenmc03_4750 (Burkholderia orbicola (strain MC0-3)).